The chain runs to 459 residues: ATP synthase subunit beta (459 aa).

148-155 (GGAGVGKT) contributes to the ATP binding site.

This sequence belongs to the ATPase alpha/beta chains family. In terms of assembly, F-type ATPases have 2 components, CF(1) - the catalytic core - and CF(0) - the membrane proton channel. CF(1) has five subunits: alpha(3), beta(3), gamma(1), delta(1), epsilon(1). CF(0) has three main subunits: a(1), b(2) and c(9-12). The alpha and beta chains form an alternating ring which encloses part of the gamma chain. CF(1) is attached to CF(0) by a central stalk formed by the gamma and epsilon chains, while a peripheral stalk is formed by the delta and b chains.

It is found in the cell inner membrane. It carries out the reaction ATP + H2O + 4 H(+)(in) = ADP + phosphate + 5 H(+)(out). Functionally, produces ATP from ADP in the presence of a proton gradient across the membrane. The catalytic sites are hosted primarily by the beta subunits. The polypeptide is ATP synthase subunit beta (Vesicomyosocius okutanii subsp. Calyptogena okutanii (strain HA)).